The sequence spans 208 residues: NAD(P)H-quinone oxidoreductase subunit I (208 aa).

2 consecutive 4Fe-4S ferredoxin-type domains span residues 55–84 (GRIH…VDWV) and 95–124 (RNYS…MTEE). C64, C67, C70, C74, C104, C107, C110, and C114 together coordinate [4Fe-4S] cluster.

This sequence belongs to the complex I 23 kDa subunit family. In terms of assembly, NDH-1 is composed of at least 11 different subunits. It depends on [4Fe-4S] cluster as a cofactor.

The protein resides in the cellular thylakoid membrane. The catalysed reaction is a plastoquinone + NADH + (n+1) H(+)(in) = a plastoquinol + NAD(+) + n H(+)(out). It carries out the reaction a plastoquinone + NADPH + (n+1) H(+)(in) = a plastoquinol + NADP(+) + n H(+)(out). Its function is as follows. NDH-1 shuttles electrons from an unknown electron donor, via FMN and iron-sulfur (Fe-S) centers, to quinones in the respiratory and/or the photosynthetic chain. The immediate electron acceptor for the enzyme in this species is believed to be plastoquinone. Couples the redox reaction to proton translocation, and thus conserves the redox energy in a proton gradient. This chain is NAD(P)H-quinone oxidoreductase subunit I, found in Prochlorococcus marinus (strain MIT 9312).